A 32-amino-acid chain; its full sequence is Cyclotide glopa A (32 aa).

Residues 1–32 constitute a cross-link (cyclopeptide (Gly-Asn)); that stretch reads GGSIPCIETCVWTGCFLVPGCSCKSDKKCYLN. 3 disulfides stabilise this stretch: Cys-6–Cys-21, Cys-10–Cys-23, and Cys-15–Cys-29.

Post-translationally, this is a cyclic peptide.

Probably participates in a plant defense mechanism. This is Cyclotide glopa A from Gloeospermum pauciflorum.